The primary structure comprises 552 residues: Iduronate 2-sulfatase (552 aa).

Residues 1 to 29 (MSPPPPPPIWRQLSFSLLLGSFCIALESA) form the signal peptide. The propeptide occupies 30-35 (AQGNSA). Ca(2+)-binding residues include Asp-47, Asp-48, and Cys-86. The Nucleophile role is filled by Cys-86. 3-oxoalanine (Cys) is present on Cys-86. A glycan (N-linked (GlcNAc...) asparagine) is linked at Asn-117. His-140 is an active-site residue. Asn-146 carries N-linked (GlcNAc...) asparagine glycosylation. The cysteines at positions 173 and 186 are disulfide-linked. Residues Asn-248 and Asn-282 are each glycosylated (N-linked (GlcNAc...) asparagine). Ca(2+) is bound by residues Asp-336 and His-337. A disulfide bridge connects residues Cys-424 and Cys-434. Residues Asn-515 and Asn-539 are each glycosylated (N-linked (GlcNAc...) asparagine).

Belongs to the sulfatase family. As to quaternary structure, monomer. The 58-kDa mature form is composed of two chains resulting from proteolitic processing, the 42-kDa chain and the 14-kDa chain that remain stably associated and form the 58-kDa intermediate form which is enzymatically active. The cofactor is Ca(2+). Synthesized as a 75-kDa precursor form in the endoplasmic reticulum (ER), and then processed by proteolytic cleavage through various intermediates to yield a 55-kDa mature form, with the release of an 18 kDa polypeptide. In terms of processing, the conversion to 3-oxoalanine (also known as C-formylglycine, FGly), of a serine or cysteine residue in prokaryotes and of a cysteine residue in eukaryotes, is critical for catalytic activity. In terms of tissue distribution, found to be expressed in alpha and beta pancreatic cells.

Its subcellular location is the lysosome. It carries out the reaction Hydrolysis of the 2-sulfate groups of the L-iduronate 2-sulfate units of dermatan sulfate, heparan sulfate and heparin.. In terms of biological role, lysosomal enzyme involved in the degradation pathway of dermatan sulfate and heparan sulfate. The protein is Iduronate 2-sulfatase (Ids) of Mus musculus (Mouse).